The chain runs to 90 residues: DNA-binding protein HU-beta (90 aa).

The protein belongs to the bacterial histone-like protein family. Heterodimer of an alpha and a beta chain.

Its function is as follows. Histone-like DNA-binding protein which is capable of wrapping DNA to stabilize it, and thus to prevent its denaturation under extreme environmental conditions. The sequence is that of DNA-binding protein HU-beta (hupB) from Pseudomonas aeruginosa (strain ATCC 15692 / DSM 22644 / CIP 104116 / JCM 14847 / LMG 12228 / 1C / PRS 101 / PAO1).